A 452-amino-acid chain; its full sequence is tRNA modification GTPase MnmE (452 aa).

(6S)-5-formyl-5,6,7,8-tetrahydrofolate is bound by residues Arg23, Glu80, and Lys119. The 160-residue stretch at 215–374 (GIWIALVGQP…LQQGLLEMIG (160 aa)) folds into the TrmE-type G domain. Asn225 is a K(+) binding site. GTP-binding positions include 225–230 (NVGKSS), 244–250 (TEVPGTT), and 269–272 (DTAG). Ser229 contributes to the Mg(2+) binding site. 3 residues coordinate K(+): Thr244, Val246, and Thr249. A Mg(2+)-binding site is contributed by Thr250. Residue Lys452 participates in (6S)-5-formyl-5,6,7,8-tetrahydrofolate binding.

The protein belongs to the TRAFAC class TrmE-Era-EngA-EngB-Septin-like GTPase superfamily. TrmE GTPase family. As to quaternary structure, homodimer. Heterotetramer of two MnmE and two MnmG subunits. K(+) is required as a cofactor.

Its subcellular location is the cytoplasm. Functionally, exhibits a very high intrinsic GTPase hydrolysis rate. Involved in the addition of a carboxymethylaminomethyl (cmnm) group at the wobble position (U34) of certain tRNAs, forming tRNA-cmnm(5)s(2)U34. The polypeptide is tRNA modification GTPase MnmE (Nitrosospira multiformis (strain ATCC 25196 / NCIMB 11849 / C 71)).